A 591-amino-acid chain; its full sequence is L-fucose isomerase (591 aa).

Residues Glu337 and Asp361 each act as proton acceptor in the active site. Mn(2+)-binding residues include Glu337, Asp361, and His528.

Belongs to the L-fucose isomerase family. Homohexamer. Mn(2+) is required as a cofactor.

The protein localises to the cytoplasm. It catalyses the reaction L-fucose = L-fuculose. Its pathway is carbohydrate degradation; L-fucose degradation; L-lactaldehyde and glycerone phosphate from L-fucose: step 1/3. In terms of biological role, converts the aldose L-fucose into the corresponding ketose L-fuculose. The polypeptide is L-fucose isomerase (Escherichia coli (strain 55989 / EAEC)).